The chain runs to 162 residues: uncharacterized protein (162 aa).

The next 4 membrane-spanning stretches (helical) occupy residues 10–30 (ILSF…MLIL), 50–70 (IVEL…ALYN), 96–116 (IAQY…IILL), and 125–145 (FTAI…LFIF).

The protein resides in the cell membrane. This is an uncharacterized protein from Methanocaldococcus jannaschii (strain ATCC 43067 / DSM 2661 / JAL-1 / JCM 10045 / NBRC 100440) (Methanococcus jannaschii).